We begin with the raw amino-acid sequence, 477 residues long: Bifunctional protein HldE (477 aa).

The tract at residues 1–318 (MKVNLPAFER…ENAVRGRADT (318 aa)) is ribokinase. Position 195–198 (195–198 (NLSE)) interacts with ATP. The active site involves aspartate 264. A cytidylyltransferase region spans residues 344–477 (MTNGVFDILH…IKKIQTESEK (134 aa)).

This sequence in the N-terminal section; belongs to the carbohydrate kinase PfkB family. The protein in the C-terminal section; belongs to the cytidylyltransferase family. Homodimer.

The enzyme catalyses D-glycero-beta-D-manno-heptose 7-phosphate + ATP = D-glycero-beta-D-manno-heptose 1,7-bisphosphate + ADP + H(+). It catalyses the reaction D-glycero-beta-D-manno-heptose 1-phosphate + ATP + H(+) = ADP-D-glycero-beta-D-manno-heptose + diphosphate. Its pathway is nucleotide-sugar biosynthesis; ADP-L-glycero-beta-D-manno-heptose biosynthesis; ADP-L-glycero-beta-D-manno-heptose from D-glycero-beta-D-manno-heptose 7-phosphate: step 1/4. It functions in the pathway nucleotide-sugar biosynthesis; ADP-L-glycero-beta-D-manno-heptose biosynthesis; ADP-L-glycero-beta-D-manno-heptose from D-glycero-beta-D-manno-heptose 7-phosphate: step 3/4. Catalyzes the phosphorylation of D-glycero-D-manno-heptose 7-phosphate at the C-1 position to selectively form D-glycero-beta-D-manno-heptose-1,7-bisphosphate. Its function is as follows. Catalyzes the ADP transfer from ATP to D-glycero-beta-D-manno-heptose 1-phosphate, yielding ADP-D-glycero-beta-D-manno-heptose. The chain is Bifunctional protein HldE from Salmonella paratyphi A (strain ATCC 9150 / SARB42).